Consider the following 218-residue polypeptide: Small ribosomal subunit protein uS3c (218 aa).

The KH type-2 domain occupies 47–118 (VQKNMRTSSG…KLNIAVTRIA (72 aa)).

The protein belongs to the universal ribosomal protein uS3 family. In terms of assembly, part of the 30S ribosomal subunit.

The protein resides in the plastid. The protein localises to the chloroplast. The sequence is that of Small ribosomal subunit protein uS3c (rps3) from Solanum bulbocastanum (Wild potato).